The chain runs to 483 residues: Proline--tRNA ligase (483 aa).

It belongs to the class-II aminoacyl-tRNA synthetase family. ProS type 3 subfamily. As to quaternary structure, homodimer.

Its subcellular location is the cytoplasm. The enzyme catalyses tRNA(Pro) + L-proline + ATP = L-prolyl-tRNA(Pro) + AMP + diphosphate. Functionally, catalyzes the attachment of proline to tRNA(Pro) in a two-step reaction: proline is first activated by ATP to form Pro-AMP and then transferred to the acceptor end of tRNA(Pro). The chain is Proline--tRNA ligase from Sulfolobus acidocaldarius (strain ATCC 33909 / DSM 639 / JCM 8929 / NBRC 15157 / NCIMB 11770).